A 208-amino-acid polypeptide reads, in one-letter code: Small ribosomal subunit protein uS4 (208 aa).

The 66-residue stretch at 98–163 (RRLDNVVYRL…KPRFIEIKEK (66 aa)) folds into the S4 RNA-binding domain.

It belongs to the universal ribosomal protein uS4 family. In terms of assembly, part of the 30S ribosomal subunit. Contacts protein S5. The interaction surface between S4 and S5 is involved in control of translational fidelity.

In terms of biological role, one of the primary rRNA binding proteins, it binds directly to 16S rRNA where it nucleates assembly of the body of the 30S subunit. Functionally, with S5 and S12 plays an important role in translational accuracy. This Caldicellulosiruptor saccharolyticus (strain ATCC 43494 / DSM 8903 / Tp8T 6331) protein is Small ribosomal subunit protein uS4.